We begin with the raw amino-acid sequence, 187 residues long: GMP synthase [glutamine-hydrolyzing] subunit A (187 aa).

Residues Met-1–Leu-187 enclose the Glutamine amidotransferase type-1 domain. Residue Cys-76 is the Nucleophile of the active site. Active-site residues include His-164 and Glu-166.

Heterodimer composed of a glutamine amidotransferase subunit (A) and a GMP-binding subunit (B).

It carries out the reaction XMP + L-glutamine + ATP + H2O = GMP + L-glutamate + AMP + diphosphate + 2 H(+). It participates in purine metabolism; GMP biosynthesis; GMP from XMP (L-Gln route): step 1/1. Catalyzes the synthesis of GMP from XMP. The protein is GMP synthase [glutamine-hydrolyzing] subunit A of Methanopyrus kandleri (strain AV19 / DSM 6324 / JCM 9639 / NBRC 100938).